A 25-amino-acid chain; its full sequence is Ocellatin-P1 (25 aa).

L25 is modified (leucine amide).

In terms of tissue distribution, expressed by the skin glands.

The protein localises to the secreted. In terms of biological role, antibacterial peptide that inhibits reference strains of both Gram-negative bacteria (E.coli, E.cloacae, K.pneumoniae, P.aeruginosa) and Gram-positive bacteria (S.aureus, S.epidermidis, E.faecalis, Streptococcus group B) with relatively low potencies (MIC=25-200 uM). The peptide shows very low hemolytic activity against human erythrocytes. Wheel projection demonstrates the amphipathicity of the alpha-helices is low which may explain the low antibacterial potency. This Leptodactylus pentadactylus (Smokey jungle frog) protein is Ocellatin-P1.